Reading from the N-terminus, the 156-residue chain is Non-structural protein 2 (156 aa).

This sequence belongs to the pneumovirus non-structural protein 2 family.

Its subcellular location is the host cytoplasm. Functionally, plays a major role in antagonizing the type I IFN-mediated antiviral response. May also inhibit viral transcription and RNA replication. This chain is Non-structural protein 2 (1B), found in Mus musculus (Mouse).